A 244-amino-acid polypeptide reads, in one-letter code: Cobalt transport protein CbiM (244 aa).

A signal peptide spans 1–28 (MKLLKNKKVTFVALLAILAVLSTQSVSA). 6 helical membrane passes run 36-56 (LPLF…VVGL), 71-91 (TMLA…IPSV), 108-128 (FGPS…ALLL), 135-155 (TLGA…YFVY), 166-186 (PVSI…TTSI), and 208-228 (GVFL…TVVL).

This sequence belongs to the CbiM family. As to quaternary structure, forms an energy-coupling factor (ECF) transporter complex composed of an ATP-binding protein (A component, CbiO), a transmembrane protein (T component, CbiQ) and 2 possible substrate-capture proteins (S components, CbiM and CbiN) of unknown stoichimetry.

The protein localises to the cell membrane. It functions in the pathway cofactor biosynthesis; adenosylcobalamin biosynthesis. Its function is as follows. Part of the energy-coupling factor (ECF) transporter complex CbiMNOQ involved in cobalt import. This Streptococcus sanguinis (strain SK36) protein is Cobalt transport protein CbiM.